Here is a 189-residue protein sequence, read N- to C-terminus: UPF0316 protein Sca_1484 (189 aa).

3 helical membrane passes run 8–28 (PWLM…CLTV), 40–60 (VAAA…GLVM), and 66–86 (FQNI…GMKI).

This sequence belongs to the UPF0316 family.

Its subcellular location is the cell membrane. In Staphylococcus carnosus (strain TM300), this protein is UPF0316 protein Sca_1484.